A 175-amino-acid chain; its full sequence is Large ribosomal subunit protein uL10 (175 aa).

It belongs to the universal ribosomal protein uL10 family. In terms of assembly, part of the ribosomal stalk of the 50S ribosomal subunit. The N-terminus interacts with L11 and the large rRNA to form the base of the stalk. The C-terminus forms an elongated spine to which L12 dimers bind in a sequential fashion forming a multimeric L10(L12)X complex.

In terms of biological role, forms part of the ribosomal stalk, playing a central role in the interaction of the ribosome with GTP-bound translation factors. This Pelotomaculum thermopropionicum (strain DSM 13744 / JCM 10971 / SI) protein is Large ribosomal subunit protein uL10.